The following is a 129-amino-acid chain: Small ribosomal subunit protein bS6 (129 aa).

Belongs to the bacterial ribosomal protein bS6 family.

Its function is as follows. Binds together with bS18 to 16S ribosomal RNA. This Pelobacter propionicus (strain DSM 2379 / NBRC 103807 / OttBd1) protein is Small ribosomal subunit protein bS6.